The following is a 115-amino-acid chain: NADH-ubiquinone oxidoreductase chain 3 (115 aa).

Helical transmembrane passes span 4–24 (LLVI…AFWL), 55–75 (FFLV…LLPI), and 84–104 (INMV…GLAY).

The protein belongs to the complex I subunit 3 family. In terms of assembly, core subunit of respiratory chain NADH dehydrogenase (Complex I) which is composed of 45 different subunits. Interacts with TMEM186. Interacts with TMEM242.

Its subcellular location is the mitochondrion inner membrane. It carries out the reaction a ubiquinone + NADH + 5 H(+)(in) = a ubiquinol + NAD(+) + 4 H(+)(out). Functionally, core subunit of the mitochondrial membrane respiratory chain NADH dehydrogenase (Complex I) which catalyzes electron transfer from NADH through the respiratory chain, using ubiquinone as an electron acceptor. Essential for the catalytic activity of complex I. The chain is NADH-ubiquinone oxidoreductase chain 3 from Ochrotomys nuttalli (Golden mouse).